The sequence spans 853 residues: EF-hand domain-containing family member B (853 aa).

Disordered stretches follow at residues M1 to P31 and A244 to I266. EF-hand domains follow at residues Q581–H616 and L617–I652. Residues D594, D598, E605, D630, D632, D634, and E641 each coordinate Ca(2+).

As to quaternary structure, microtubule inner protein component of sperm flagellar doublet microtubules. Interacts with STIM1 and ORAI1; the interactions take place upon Ca(2+)-store depletion and dissociate through a Ca(2+)-dependent mechanism. Interaction with STIM1 inhibits STIM1 interaction with SARAF.

The protein resides in the cytoplasm. Its subcellular location is the cytoskeleton. The protein localises to the cilium axoneme. It is found in the flagellum axoneme. Functionally, microtubule inner protein (MIP) part of the dynein-decorated doublet microtubules (DMTs) in cilia axoneme, which is required for motile cilia beating. Cytosolic sensor for calcium, modulates the interaction of STIM1 and ORAI1 upon store depletion and the activation of store-operated Ca(2+) entry (SOCE) and NFAT translocation from cytosol to nucleus. In Mus musculus (Mouse), this protein is EF-hand domain-containing family member B.